We begin with the raw amino-acid sequence, 129 residues long: Small ribosomal subunit protein uS9 (129 aa).

It belongs to the universal ribosomal protein uS9 family.

The protein is Small ribosomal subunit protein uS9 of Pelodictyon phaeoclathratiforme (strain DSM 5477 / BU-1).